Here is a 130-residue protein sequence, read N- to C-terminus: Small ribosomal subunit protein uS9 (130 aa).

The protein belongs to the universal ribosomal protein uS9 family.

The protein is Small ribosomal subunit protein uS9 of Yersinia pseudotuberculosis serotype O:1b (strain IP 31758).